The primary structure comprises 753 residues: 5-methyltetrahydropteroyltriglutamate--homocysteine methyltransferase (753 aa).

5-methyltetrahydropteroyltri-L-glutamate contacts are provided by residues 17-20 and Lys117; that span reads RELK. L-homocysteine contacts are provided by residues 431–433 and Glu484; that span reads IGS. L-methionine-binding positions include 431–433 and Glu484; that span reads IGS. Residues 515–516 and Trp561 each bind 5-methyltetrahydropteroyltri-L-glutamate; that span reads RC. Asp599 contributes to the L-homocysteine binding site. Asp599 contacts L-methionine. Glu605 is a 5-methyltetrahydropteroyltri-L-glutamate binding site. 3 residues coordinate Zn(2+): His641, Cys643, and Glu665. His694 functions as the Proton donor in the catalytic mechanism. Cys726 contributes to the Zn(2+) binding site.

Belongs to the vitamin-B12 independent methionine synthase family. The cofactor is Zn(2+).

It carries out the reaction 5-methyltetrahydropteroyltri-L-glutamate + L-homocysteine = tetrahydropteroyltri-L-glutamate + L-methionine. Its pathway is amino-acid biosynthesis; L-methionine biosynthesis via de novo pathway; L-methionine from L-homocysteine (MetE route): step 1/1. Its function is as follows. Catalyzes the transfer of a methyl group from 5-methyltetrahydrofolate to homocysteine resulting in methionine formation. In Escherichia coli O1:K1 / APEC, this protein is 5-methyltetrahydropteroyltriglutamate--homocysteine methyltransferase.